The following is a 505-amino-acid chain: MDLLLLEKTLLGLFIAAITAIAISKLRGRRFKLPPGPIPVPIFGNWLQVGDDLNHRNLTDLAKRFGDIFLLRMGQRNLVVVSSPELAKEVLHTQGVEFGSRTRNVVFDIFTGKGQDMVFTVYGEHWRKMRRIMTVPFFTNKVVQQYRFGWESEAASVVDDVRRNPDAAAGGIVLRRRLQLMMYNNMYRIMFDRRFESEEDPLFVKLKALNGERSRLAQSFEYNYGDFIPILRPFLKGYLKICKEVKERRLKLFKDYFVDERMKLESTKSTSNEGLKCAIDHILDAQKKGEINEDNVLYIVENINVAAIETTLWSIEWGIAELVNHPEIQKKVRDEIDRVLGPGHQVTEPDMQKLPYLQAVIKETLRLRMAIPLLVPHMNLHDAKLGGYDIPAESKILVNAWWLANNPANWKRPEEFRPERFLEEESHVEANGNDFRYLPFGVGRRSCPGIILALPILGITLGRLVQNFELLPPPGQSKLDTAEKGGQFSLHILKHSTIVAKPRSF.

Residues 3–23 (LLLLEKTLLGLFIAAITAIAI) form a helical membrane-spanning segment. (E)-cinnamate is bound by residues 213–218 (RSRLAQ) and alanine 306. Cysteine 447 is a binding site for heme.

The protein belongs to the cytochrome P450 family. It depends on heme as a cofactor.

It localises to the membrane. It carries out the reaction (E)-cinnamate + reduced [NADPH--hemoprotein reductase] + O2 = (E)-4-coumarate + oxidized [NADPH--hemoprotein reductase] + H2O + H(+). The protein operates within phenylpropanoid metabolism; trans-4-coumarate biosynthesis; trans-4-coumarate from trans-cinnamate: step 1/1. Catalyzes the first oxidative step of the phenylpropanoid pathway in higher plants by transforming trans-cinnamate into p-coumarate. The compounds formed by this pathway are essential components for lignification, pollination, and defense against ultraviolet light, predators and pathogens. This Glycyrrhiza echinata (Licorice) protein is Trans-cinnamate 4-monooxygenase (CYP73A14).